A 441-amino-acid chain; its full sequence is Adenylyltransferase and sulfurtransferase MOCS3 (441 aa).

ATP is bound by residues G83, D104, 111–115 (TNLHR), K128, and 172–173 (DN). Positions 213 and 216 each coordinate Zn(2+). C230 (glycyl thioester intermediate; for adenylyltransferase activity) is an active-site residue. Residues C288 and C291 each contribute to the Zn(2+) site. One can recognise a Rhodanese domain in the interval 339-439 (AGRDHLLVDV…WTKTIDPNFP (101 aa)). The active-site Cysteine persulfide intermediate; for sulfurtransferase activity is the C395.

The protein in the N-terminal section; belongs to the HesA/MoeB/ThiF family. UBA4 subfamily. The cofactor is Zn(2+).

Its subcellular location is the cytoplasm. It catalyses the reaction [molybdopterin-synthase sulfur-carrier protein]-C-terminal Gly-Gly + ATP + H(+) = [molybdopterin-synthase sulfur-carrier protein]-C-terminal Gly-Gly-AMP + diphosphate. The enzyme catalyses [molybdopterin-synthase sulfur-carrier protein]-C-terminal Gly-Gly-AMP + S-sulfanyl-L-cysteinyl-[cysteine desulfurase] + AH2 = [molybdopterin-synthase sulfur-carrier protein]-C-terminal-Gly-aminoethanethioate + L-cysteinyl-[cysteine desulfurase] + A + AMP + 2 H(+). The protein operates within tRNA modification; 5-methoxycarbonylmethyl-2-thiouridine-tRNA biosynthesis. Its pathway is cofactor biosynthesis; molybdopterin biosynthesis. Functionally, plays a central role in 2-thiolation of mcm(5)S(2)U at tRNA wobble positions of cytosolic tRNA(Lys), tRNA(Glu) and tRNA(Gln). Also essential during biosynthesis of the molybdenum cofactor. Acts by mediating the C-terminal thiocarboxylation of sulfur carriers URM1 and MOCS2A. Its N-terminus first activates URM1 and MOCS2A as acyl-adenylates (-COAMP), then the persulfide sulfur on the catalytic cysteine is transferred to URM1 and MOCS2A to form thiocarboxylation (-COSH) of their C-terminus. The reaction probably involves hydrogen sulfide that is generated from the persulfide intermediate and that acts as a nucleophile towards URM1 and MOCS2A. Subsequently, a transient disulfide bond is formed. Does not use thiosulfate as sulfur donor; NFS1 probably acting as a sulfur donor for thiocarboxylation reactions. This chain is Adenylyltransferase and sulfurtransferase MOCS3, found in Anopheles gambiae (African malaria mosquito).